The chain runs to 155 residues: RNA-binding protein 3 (155 aa).

Residues 6–84 form the RRM domain; sequence GKLFVGGLNF…RQIRVDHAGK (79 aa). R47 bears the Omega-N-methylarginine mark. A disordered region spans residues 79 to 155; sequence VDHAGKSARG…GGNYRDNYDN (77 aa). R105 is subject to Asymmetric dimethylarginine; alternate. At R105 the chain carries Dimethylated arginine; alternate. Residue R105 is modified to Omega-N-methylarginine; alternate. Over residues 105-114 the composition is skewed to gly residues; sequence RGGGDQGYGS. R120 and R130 each carry omega-N-methylarginine. 2 positions are modified to phosphoserine: S135 and S145. Y153 bears the Phosphotyrosine mark.

In terms of assembly, interacts with RPL4. Associates with the 60S ribosomal subunits. Arg-105 is dimethylated, probably to asymmetric dimethylarginine. In terms of processing, phosphorylated. Isoform 2 is methylated. Widely expressed in the brain. Highly expressed in the cerebellum and olfactory bulb (at protein level). Expressed in neurons and glial cells.

Its subcellular location is the nucleus. It localises to the cytoplasm. The protein resides in the cell projection. The protein localises to the dendrite. In terms of biological role, cold-inducible mRNA binding protein that enhances global protein synthesis at both physiological and mild hypothermic temperatures. Reduces the relative abundance of microRNAs, when overexpressed. Enhances phosphorylation of translation initiation factors and active polysome formation. This chain is RNA-binding protein 3 (Rbm3), found in Rattus norvegicus (Rat).